The chain runs to 241 residues: Probable 2-phosphosulfolactate phosphatase (241 aa).

The protein belongs to the ComB family. Mg(2+) serves as cofactor.

It carries out the reaction (2R)-O-phospho-3-sulfolactate + H2O = (2R)-3-sulfolactate + phosphate. The sequence is that of Probable 2-phosphosulfolactate phosphatase from Microcystis aeruginosa (strain NIES-843 / IAM M-2473).